A 221-amino-acid polypeptide reads, in one-letter code: Uracil-DNA glycosylase (221 aa).

D63 (proton acceptor) is an active-site residue.

The protein belongs to the uracil-DNA glycosylase (UDG) superfamily. UNG family.

Its subcellular location is the cytoplasm. The enzyme catalyses Hydrolyzes single-stranded DNA or mismatched double-stranded DNA and polynucleotides, releasing free uracil.. Excises uracil residues from the DNA which can arise as a result of misincorporation of dUMP residues by DNA polymerase or due to deamination of cytosine. This Blochmanniella floridana protein is Uracil-DNA glycosylase.